A 268-amino-acid polypeptide reads, in one-letter code: Interleukin-1 alpha (268 aa).

Positions 1–112 (MAKVPDLFED…NTEEEIIKPR (112 aa)) are excised as a propeptide. Lys-82 is modified (N6-acetyllysine). Residues 82 to 86 (KKRRL) are nuclear localization signal (NLS). Residue Ser-87 is modified to Phosphoserine. N-linked (GlcNAc...) asparagine glycans are attached at residues Asn-102 and Asn-141.

This sequence belongs to the IL-1 family. As to quaternary structure, monomer. Interacts with TMED10; the interaction mediates the translocation from the cytoplasm into the ERGIC (endoplasmic reticulum-Golgi intermediate compartment) and thereby secretion. Interacts with IL1R1. Interacts with S100A13; this interaction is the first step in the export of IL1A, followed by direct translocation of this complex across the plasma membrane. Post-translationally, acetylated within its nuclear localization sequence, which impacts subcellular localization. In terms of processing, proteolytic processed by CAPN1 in a calcium-dependent manner. Cleavage from 31 kDa precursor to 18 kDa biologically active molecules. Phosphorylated. Phosphorylation greatly enhances susceptibility to digestion and promotes the conversion of pre-IL1A alpha to the biologically active IL1A.

It localises to the nucleus. Its subcellular location is the cytoplasm. It is found in the secreted. Cytokine constitutively present intracellularly in nearly all resting non-hematopoietic cells that plays an important role in inflammation and bridges the innate and adaptive immune systems. After binding to its receptor IL1R1 together with its accessory protein IL1RAP, forms the high affinity interleukin-1 receptor complex. Signaling involves the recruitment of adapter molecules such as MYD88, IRAK1 or IRAK4. In turn, mediates the activation of NF-kappa-B and the three MAPK pathways p38, p42/p44 and JNK pathways. Within the cell, acts as an alarmin and cell death results in its liberation in the extracellular space after disruption of the cell membrane to induce inflammation and alert the host to injury or damage. In addition to its role as a danger signal, which occurs when the cytokine is passively released by cell necrosis, directly senses DNA damage and acts as signal for genotoxic stress without loss of cell integrity. This Bos taurus (Bovine) protein is Interleukin-1 alpha (IL1A).